Here is a 256-residue protein sequence, read N- to C-terminus: Hypodermin-A (256 aa).

Positions 1–22 are cleaved as a signal peptide; the sequence is MLKFVILLCSIAYVFGAVVPLG. A propeptide spans 23 to 30 (activation peptide); the sequence is MLSQSDGR. One can recognise a Peptidase S1 domain in the interval 31–254; that stretch reads IVGGVESKIE…VRSLIVSNAE (224 aa). A disulfide bridge connects residues cysteine 56 and cysteine 72. Residues histidine 71 and aspartate 116 each act as charge relay system in the active site. Cystine bridges form between cysteine 180-cysteine 197 and cysteine 206-cysteine 230. Residue serine 210 is the Charge relay system of the active site.

The protein belongs to the peptidase S1 family.

It is found in the secreted. In terms of biological role, specificity, limited to carboxyl side of arginine residue in B-chain of insulin. This Hypoderma lineatum (Early cattle grub) protein is Hypodermin-A.